The primary structure comprises 376 residues: Queuine tRNA-ribosyltransferase (376 aa).

Asp-93 functions as the Proton acceptor in the catalytic mechanism. Residues Asp-93–Phe-97, Asp-147, Gln-190, and Gly-217 contribute to the substrate site. The RNA binding stretch occupies residues Gly-248–Asp-254. The active-site Nucleophile is the Asp-267. The interval Thr-272–Arg-276 is RNA binding; important for wobble base 34 recognition.

This sequence belongs to the queuine tRNA-ribosyltransferase family. Homodimer. Within each dimer, one monomer is responsible for RNA recognition and catalysis, while the other monomer binds to the replacement base PreQ1.

It carries out the reaction 7-aminomethyl-7-carbaguanine + guanosine(34) in tRNA = 7-aminomethyl-7-carbaguanosine(34) in tRNA + guanine. Its pathway is tRNA modification; tRNA-queuosine biosynthesis. In terms of biological role, catalyzes the base-exchange of a guanine (G) residue with the queuine precursor 7-aminomethyl-7-deazaguanine (PreQ1) at position 34 (anticodon wobble position) in tRNAs with GU(N) anticodons (tRNA-Asp, -Asn, -His and -Tyr). Catalysis occurs through a double-displacement mechanism. The nucleophile active site attacks the C1' of nucleotide 34 to detach the guanine base from the RNA, forming a covalent enzyme-RNA intermediate. The proton acceptor active site deprotonates the incoming PreQ1, allowing a nucleophilic attack on the C1' of the ribose to form the product. After dissociation, two additional enzymatic reactions on the tRNA convert PreQ1 to queuine (Q), resulting in the hypermodified nucleoside queuosine (7-(((4,5-cis-dihydroxy-2-cyclopenten-1-yl)amino)methyl)-7-deazaguanosine). The chain is Queuine tRNA-ribosyltransferase from Rhizobium meliloti (strain 1021) (Ensifer meliloti).